A 144-amino-acid polypeptide reads, in one-letter code: Large ribosomal subunit protein uL13 (144 aa).

Belongs to the universal ribosomal protein uL13 family. In terms of assembly, part of the 50S ribosomal subunit.

Functionally, this protein is one of the early assembly proteins of the 50S ribosomal subunit, although it is not seen to bind rRNA by itself. It is important during the early stages of 50S assembly. This Desulfovibrio desulfuricans (strain ATCC 27774 / DSM 6949 / MB) protein is Large ribosomal subunit protein uL13.